The chain runs to 564 residues: Arginine--tRNA ligase (564 aa).

Positions 122–132 (PNIAKPFSIGH) match the 'HIGH' region motif.

It belongs to the class-I aminoacyl-tRNA synthetase family. As to quaternary structure, monomer.

The protein localises to the cytoplasm. It carries out the reaction tRNA(Arg) + L-arginine + ATP = L-arginyl-tRNA(Arg) + AMP + diphosphate. The polypeptide is Arginine--tRNA ligase (Lactococcus lactis subsp. cremoris (strain SK11)).